Consider the following 519-residue polypeptide: General transcription factor 3C polypeptide 5 (519 aa).

Residue alanine 2 is modified to N-acetylalanine. The disordered stretch occupies residues 465-519; that stretch reads ALFSSSAKADGGKEQLTYESGEDEEDEEEEEEEEEDFKPSDGSENEMETEILDYV. Acidic residues-rich tracts occupy residues 484-500 and 507-519; these read SGED…EEED and SENE…LDYV.

Belongs to the TFIIIC subunit 5 family. In terms of assembly, part of the TFIIIC subcomplex TFIIIC2, consisting of six subunits, GTF3C1, GTF3C2, GTF3C3, GTF3C4, GTF3C5 and GTF3C6. Interacts with BRF1, GTF3C6 and TBP.

It is found in the nucleus. Involved in RNA polymerase III-mediated transcription. Integral, tightly associated component of the DNA-binding TFIIIC2 subcomplex that directly binds tRNA and virus-associated RNA promoters. The protein is General transcription factor 3C polypeptide 5 (GTF3C5) of Homo sapiens (Human).